The chain runs to 38 residues: Photosystem I reaction center subunit IX (38 aa).

A helical membrane pass occupies residues 4–24; that stretch reads FLTTAPVVAAIWFTATAGILI.

Belongs to the PsaJ family.

It localises to the cellular thylakoid membrane. Functionally, may help in the organization of the PsaE and PsaF subunits. This is Photosystem I reaction center subunit IX from Synechococcus sp. (strain CC9902).